The chain runs to 311 residues: Glutamyl-Q tRNA(Asp) synthetase (311 aa).

L-glutamate is bound by residues Arg-14–Ser-18 and Glu-50. The 'HIGH' region motif lies at Pro-17–Asn-27. Positions 104, 106, 125, and 129 each coordinate Zn(2+). Tyr-186 and Arg-204 together coordinate L-glutamate. Positions Arg-242–Arg-246 match the 'KMSKS' region motif. Lys-245 provides a ligand contact to ATP.

The protein belongs to the class-I aminoacyl-tRNA synthetase family. GluQ subfamily. Zn(2+) is required as a cofactor.

Catalyzes the tRNA-independent activation of glutamate in presence of ATP and the subsequent transfer of glutamate onto a tRNA(Asp). Glutamate is transferred on the 2-amino-5-(4,5-dihydroxy-2-cyclopenten-1-yl) moiety of the queuosine in the wobble position of the QUC anticodon. The polypeptide is Glutamyl-Q tRNA(Asp) synthetase (Nocardia farcinica (strain IFM 10152)).